The following is a 548-amino-acid chain: Kinetochore and Eb1-associated basic protein (548 aa).

2 disordered regions span residues 1–51 (MSSM…PKHP) and 82–181 (YRSS…IRPK). Basic and acidic residues-rich tracts occupy residues 20–29 (RTKELLERQR), 104–116 (RTWEGPKTPEFRS), and 127–141 (PRPRRAKELLEDLRS). Residues 100–253 (QNRQRTWEGP…TTSKRKLDFK (154 aa)) are important for kinetochore and microtubule localization. Over residues 144–155 (QGTPATKIPSQR) the composition is skewed to polar residues. Positions 149 to 152 (TKIP) match the SXIP motif 1 motif. Over residues 156 to 165 (NPKENQELSK) the composition is skewed to basic and acidic residues. Positions 166–175 (SHTCIPSSEP) are enriched in polar residues. Positions 168–171 (TCIP) match the SXIP motif 2 motif. The tract at residues 237-372 (SDKGIKLTTS…MCALPVVSEK (136 aa)) is CH (calponin-homology)-like region, which is not required for kinetochore and microtubule localization. Residues 386-457 (YDVMSLQQKF…LQLQRLRLQE (72 aa)) are a coiled coil.

In terms of assembly, interacts with Eb1 via the two SxIP motifs; the interaction is not required for kebab kinetochore localization.

Its subcellular location is the cytoplasm. It localises to the perinuclear region. The protein resides in the chromosome. It is found in the centromere. The protein localises to the kinetochore. Its subcellular location is the cytoskeleton. It localises to the spindle. The protein is Kinetochore and Eb1-associated basic protein of Drosophila melanogaster (Fruit fly).